Consider the following 130-residue polypeptide: MAEYGTLLQDLTNNITLEDLEQLKSACKEDIPSEKSEEITTGSAWFSFLESHNKLDKDNLSYIEHIFEISRRPDLLTMVVDYRTRVLKISEEEELDTKLTRIPSAKKYKDIIRQPSEEEIIKLAPPPKKA.

In terms of domain architecture, DED spans 3-81 (EYGTLLQDLT…RPDLLTMVVD (79 aa)). Ser-61 and Ser-90 each carry phosphoserine. Residues 98–107 (KLTRIPSAKK) form a microtubule-binding region. Ser-104 carries the phosphoserine; by PKC modification. At Ser-116 the chain carries Phosphoserine; by CaMK2. A microtubule-binding region spans residues 122–129 (KLAPPPKK).

In terms of assembly, binds RPS6KA3, MAPK3 and MAPK1. Interacts with CASP8 and FADD. Transient interaction with PLD1 and PLD2. Phosphorylated by protein kinase C and calcium-calmodulin-dependent protein kinase. These phosphorylation events are modulated by neurotransmitters or hormones. Predominantly expressed in the brain. Low levels in some peripheral organs.

The protein resides in the cytoplasm. Its function is as follows. Blocks Ras-mediated inhibition of integrin activation and modulates the ERK MAP kinase cascade. Inhibits RPS6KA3 activities by retaining it in the cytoplasm. Inhibits both TNFRSF6- and TNFRSF1A-mediated CASP8 activity and apoptosis. Regulates glucose transport by controlling both the content of SLC2A1 glucose transporters on the plasma membrane and the insulin-dependent trafficking of SLC2A4 from the cell interior to the surface. The chain is Astrocytic phosphoprotein PEA-15 (Pea15) from Mus musculus (Mouse).